Consider the following 387-residue polypeptide: Cytochrome b (387 aa).

The next 4 membrane-spanning stretches (helical) occupy residues 32–52 (FGSL…TLAM), 76–98 (WLVR…LHIG), 113–133 (TWAI…LGYV), and 179–199 (FFAL…MHLI). Heme b-binding residues include histidine 82 and histidine 96. Residues histidine 183 and histidine 197 each coordinate heme b. Position 202 (histidine 202) interacts with a ubiquinone. A run of 4 helical transmembrane segments spans residues 226-246 (FIFK…IFVF), 290-310 (LLGV…PITD), 322-342 (LSKV…QIGA), and 349-369 (FIEF…VIVP).

Belongs to the cytochrome b family. Fungal cytochrome b-c1 complex contains 10 subunits; 3 respiratory subunits, 2 core proteins and 5 low-molecular weight proteins. Cytochrome b-c1 complex is a homodimer. Requires heme b as cofactor.

It is found in the mitochondrion inner membrane. Component of the ubiquinol-cytochrome c reductase complex (complex III or cytochrome b-c1 complex) that is part of the mitochondrial respiratory chain. The b-c1 complex mediates electron transfer from ubiquinol to cytochrome c. Contributes to the generation of a proton gradient across the mitochondrial membrane that is then used for ATP synthesis. The sequence is that of Cytochrome b (cob) from Emericella nidulans (Aspergillus nidulans).